Reading from the N-terminus, the 422-residue chain is L-threonine dehydratase biosynthetic IlvA (422 aa).

Lys-56 is subject to N6-(pyridoxal phosphate)lysine. Pyridoxal 5'-phosphate-binding positions include Asn-83, 189-193 (GGGGL), and Ser-315. Positions 339–413 (HYFILNFPQR…FDPSNIYINE (75 aa)) constitute an ACT-like domain.

The protein belongs to the serine/threonine dehydratase family. In terms of assembly, homotetramer. It depends on pyridoxal 5'-phosphate as a cofactor.

It catalyses the reaction L-threonine = 2-oxobutanoate + NH4(+). Its pathway is amino-acid biosynthesis; L-isoleucine biosynthesis; 2-oxobutanoate from L-threonine: step 1/1. Its function is as follows. Catalyzes the anaerobic formation of alpha-ketobutyrate and ammonia from threonine in a two-step reaction. The first step involved a dehydration of threonine and a production of enamine intermediates (aminocrotonate), which tautomerizes to its imine form (iminobutyrate). Both intermediates are unstable and short-lived. The second step is the nonenzymatic hydrolysis of the enamine/imine intermediates to form 2-ketobutyrate and free ammonia. In the low water environment of the cell, the second step is accelerated by RidA. The polypeptide is L-threonine dehydratase biosynthetic IlvA (ilvA) (Staphylococcus aureus (strain NCTC 8325 / PS 47)).